Reading from the N-terminus, the 792-residue chain is Phenylalanine--tRNA ligase beta subunit (792 aa).

The 112-residue stretch at 39-150 folds into the tRNA-binding domain; sequence APAFHKVVVA…PDAPVGTDFR (112 aa). The region spanning 405–480 is the B5 domain; the sequence is PARDPIRLGL…RMYGYNRIAA (76 aa). Mg(2+) contacts are provided by D458, D464, E467, and E468. The FDX-ACB domain occupies 698–791; the sequence is SKYPPIRRDI…LENRFGARLR (94 aa).

It belongs to the phenylalanyl-tRNA synthetase beta subunit family. Type 1 subfamily. As to quaternary structure, tetramer of two alpha and two beta subunits. It depends on Mg(2+) as a cofactor.

The protein localises to the cytoplasm. The enzyme catalyses tRNA(Phe) + L-phenylalanine + ATP = L-phenylalanyl-tRNA(Phe) + AMP + diphosphate + H(+). This chain is Phenylalanine--tRNA ligase beta subunit, found in Nitrosospira multiformis (strain ATCC 25196 / NCIMB 11849 / C 71).